A 216-amino-acid chain; its full sequence is Splicing factor U2AF 23 kDa subunit (216 aa).

The segment at 12-40 adopts a C3H1-type 1 zinc-finger fold; the sequence is EQDKVNCSFYYKIGACRHGERCSRKHVKP. The region spanning 44-141 is the RRM domain; it reads QTILCPNMYK…RPVYAELSPV (98 aa). The segment at 143–170 adopts a C3H1-type 2 zinc-finger fold; the sequence is DFREACCRQHETSECQRGGLCNFMHAKK. The segment at 194–216 is disordered; that stretch reads EMKKEPNSDSTNRWVSVTAERKN.

In terms of assembly, forms a heterodimer with the U2AF large subunit. Can also form a homodimer. U2AF large subunit (U2AF59), U2AF small subunit (U2AF23) and SF1 (bpb1) interact to form a complex required for complex A formation. Interacts with cwf13.

Its subcellular location is the nucleus. Functionally, necessary for the splicing of pre-mRNA. The SF1-U2AF59-U2AF23 complex has a role in the recognition of the branch site (5'-UACUAAC-3'), the pyrimidine tract and the 3'-splice site at the 3'-end of introns. This chain is Splicing factor U2AF 23 kDa subunit, found in Schizosaccharomyces pombe (strain 972 / ATCC 24843) (Fission yeast).